The following is a 520-amino-acid chain: Glucose starvation modulator protein 1 (520 aa).

The segment at residues 20–48 (CVFCHEKHLQCSNERPCKNCVKRGLAHEC) is a DNA-binding region (zn(2)-C6 fungal-type). Residues 376–445 (DYEKLSQLNS…FRLFKTVAVG (70 aa)) enclose the PAS domain.

The protein belongs to the ERT1/acuK family.

It localises to the nucleus. Transcription factor which regulates nonfermentable carbon utilization. The sequence is that of Glucose starvation modulator protein 1 (GSM1) from Scheffersomyces stipitis (strain ATCC 58785 / CBS 6054 / NBRC 10063 / NRRL Y-11545) (Yeast).